The primary structure comprises 600 residues: ATP-dependent lipid A-core flippase (600 aa).

4 helical membrane-spanning segments follow: residues Ile27–Leu47, Leu83–Leu103, Leu174–Val194, and Pro267–Leu287. The ABC transmembrane type-1 domain maps to Leu31–Lys322. The region spanning Leu354–Met590 is the ABC transporter domain. Residue Gly388–Ser395 participates in ATP binding.

This sequence belongs to the ABC transporter superfamily. Lipid exporter (TC 3.A.1.106) family. Homodimer.

Its subcellular location is the cell inner membrane. The enzyme catalyses ATP + H2O + lipid A-core oligosaccharideSide 1 = ADP + phosphate + lipid A-core oligosaccharideSide 2.. Involved in lipopolysaccharide (LPS) biosynthesis. Translocates lipid A-core from the inner to the outer leaflet of the inner membrane. Transmembrane domains (TMD) form a pore in the inner membrane and the ATP-binding domain (NBD) is responsible for energy generation. The sequence is that of ATP-dependent lipid A-core flippase from Pseudomonas fluorescens (strain Pf0-1).